A 62-amino-acid polypeptide reads, in one-letter code: Photosystem II reaction center protein Z (62 aa).

The next 2 membrane-spanning stretches (helical) occupy residues 8 to 28 (ALVA…VAYA) and 41 to 61 (WLGS…NFFV).

Belongs to the PsbZ family. As to quaternary structure, PSII is composed of 1 copy each of membrane proteins PsbA, PsbB, PsbC, PsbD, PsbE, PsbF, PsbH, PsbI, PsbJ, PsbK, PsbL, PsbM, PsbT, PsbX, PsbY, PsbZ, Psb30/Ycf12, peripheral proteins PsbO, CyanoQ (PsbQ), PsbU, PsbV and a large number of cofactors. It forms dimeric complexes.

It is found in the cellular thylakoid membrane. Functionally, may control the interaction of photosystem II (PSII) cores with the light-harvesting antenna, regulates electron flow through the 2 photosystem reaction centers. PSII is a light-driven water plastoquinone oxidoreductase, using light energy to abstract electrons from H(2)O, generating a proton gradient subsequently used for ATP formation. The polypeptide is Photosystem II reaction center protein Z (Nostoc sp. (strain PCC 7120 / SAG 25.82 / UTEX 2576)).